Here is a 186-residue protein sequence, read N- to C-terminus: MSLLTIHPESGTSAPEIIREGDAIAARLAEIGVLFERWQAGRAFEPDAEQQTILAAYADSVERLKAKYGFESADVISVGPDHPQKDELRARFLREHTHSDFEVRFFVEGRGLFYLHPGDRVYAILCERGDLLSVPSNTRHWFDMGAEPCLKCIRLFTTAEGWVADFTGSDIGDRFPRLEDYLKHYA.

Fe(2+) contacts are provided by histidine 96, histidine 98, glutamate 102, and histidine 140. Ni(2+) is bound by residues histidine 96, histidine 98, glutamate 102, and histidine 140.

Belongs to the acireductone dioxygenase (ARD) family. As to quaternary structure, monomer. Fe(2+) is required as a cofactor. The cofactor is Ni(2+).

It catalyses the reaction 1,2-dihydroxy-5-(methylsulfanyl)pent-1-en-3-one + O2 = 3-(methylsulfanyl)propanoate + CO + formate + 2 H(+). It carries out the reaction 1,2-dihydroxy-5-(methylsulfanyl)pent-1-en-3-one + O2 = 4-methylsulfanyl-2-oxobutanoate + formate + 2 H(+). The protein operates within amino-acid biosynthesis; L-methionine biosynthesis via salvage pathway; L-methionine from S-methyl-5-thio-alpha-D-ribose 1-phosphate: step 5/6. Catalyzes 2 different reactions between oxygen and the acireductone 1,2-dihydroxy-3-keto-5-methylthiopentene (DHK-MTPene) depending upon the metal bound in the active site. Fe-containing acireductone dioxygenase (Fe-ARD) produces formate and 2-keto-4-methylthiobutyrate (KMTB), the alpha-ketoacid precursor of methionine in the methionine recycle pathway. Ni-containing acireductone dioxygenase (Ni-ARD) produces methylthiopropionate, carbon monoxide and formate, and does not lie on the methionine recycle pathway. The sequence is that of Acireductone dioxygenase from Methylococcus capsulatus (strain ATCC 33009 / NCIMB 11132 / Bath).